A 305-amino-acid polypeptide reads, in one-letter code: Ribonuclease Z (305 aa).

Positions 61, 63, 65, 66, 138, 208, and 266 each coordinate Zn(2+). Residue D65 is the Proton acceptor of the active site.

This sequence belongs to the RNase Z family. Homodimer. The cofactor is Zn(2+).

It catalyses the reaction Endonucleolytic cleavage of RNA, removing extra 3' nucleotides from tRNA precursor, generating 3' termini of tRNAs. A 3'-hydroxy group is left at the tRNA terminus and a 5'-phosphoryl group is left at the trailer molecule.. Its function is as follows. Zinc phosphodiesterase, which displays some tRNA 3'-processing endonuclease activity. Probably involved in tRNA maturation, by removing a 3'-trailer from precursor tRNA. In Methanosarcina mazei (strain ATCC BAA-159 / DSM 3647 / Goe1 / Go1 / JCM 11833 / OCM 88) (Methanosarcina frisia), this protein is Ribonuclease Z.